The sequence spans 917 residues: Translation initiation factor IF-2 (917 aa).

The interval 1–312 (MEEQKSIKET…KGGREENENT (312 aa)) is disordered. The span at 20–30 (TKKKLVIKKKA) shows a compositional bias: basic residues. The segment covering 41–59 (PGAQGQTTATEAKQSSPAS) has biased composition (polar residues). Composition is skewed to basic and acidic residues over residues 60 to 76 (SDKK…EAKR) and 95 to 118 (RPDR…RKPE). Composition is skewed to gly residues over residues 132 to 141 (SGGGQGGGNQ), 167 to 256 (QTGG…GYQG), and 281 to 293 (APGG…GPGG). Over residues 297-312 (RVFDKEKGGREENENT) the composition is skewed to basic and acidic residues. Positions 414–587 (TRPPVVTIMG…ELLDHKANPK (174 aa)) constitute a tr-type G domain. The segment at 423-430 (GHVDHGKT) is G1. GTP is bound at residue 423–430 (GHVDHGKT). The tract at residues 448-452 (GITQH) is G2. A G3 region spans residues 469-472 (DTPG). Residues 469–473 (DTPGH) and 523–526 (NKID) each bind GTP. A G4 region spans residues 523–526 (NKID). The G5 stretch occupies residues 559 to 561 (SAK).

This sequence belongs to the TRAFAC class translation factor GTPase superfamily. Classic translation factor GTPase family. IF-2 subfamily.

The protein resides in the cytoplasm. Functionally, one of the essential components for the initiation of protein synthesis. Protects formylmethionyl-tRNA from spontaneous hydrolysis and promotes its binding to the 30S ribosomal subunits. Also involved in the hydrolysis of GTP during the formation of the 70S ribosomal complex. The sequence is that of Translation initiation factor IF-2 from Leptospira biflexa serovar Patoc (strain Patoc 1 / ATCC 23582 / Paris).